Consider the following 469-residue polypeptide: Carboxypeptidase Q (469 aa).

The first 19 residues, 1 to 19 (MKTLILTLLSLYELQLCCG), serve as a signal peptide directing secretion. A propeptide spanning residues 20-42 (AYNQNIRSQRKFEMIKTEISSYK) is cleaved from the precursor. N-linked (GlcNAc...) asparagine glycans are attached at residues asparagine 59 and asparagine 159. Residues histidine 288 and aspartate 300 each contribute to the Zn(2+) site. Catalysis depends on glutamate 334, which acts as the Nucleophile. Glutamate 335 is a Zn(2+) binding site. A glycan (N-linked (GlcNAc...) asparagine) is linked at asparagine 351. Aspartate 362 serves as a coordination point for Zn(2+). The N-linked (GlcNAc...) asparagine glycan is linked to asparagine 394. Histidine 432 is a Zn(2+) binding site.

The protein belongs to the peptidase M28 family. In terms of assembly, homodimer. The monomeric form is inactive while the homodimer is active.

Its subcellular location is the endoplasmic reticulum. It is found in the golgi apparatus. The protein localises to the lysosome. It localises to the secreted. Functionally, carboxypeptidase that may play an important role in the hydrolysis of circulating peptides. Catalyzes more efficiently the hydrolysis of dipeptides with unsubstituted terminals into amino acids. This Xenopus laevis (African clawed frog) protein is Carboxypeptidase Q (cpq).